A 405-amino-acid polypeptide reads, in one-letter code: uncharacterized protein (405 aa).

Disordered stretches follow at residues 1–21 (MSKKVNKNASPKNNSDSESKT), 150–179 (IKDESDSDSDDEDTKKKKKNTKNKGKQEGP), and 285–405 (DDED…KSRS). Residues 7–16 (KNASPKNNSD) are compositionally biased toward polar residues. Acidic residues-rich tracts occupy residues 312 to 331 (SDDEDSDNEKEKEKEEDDEE) and 349 to 358 (DDEDDEEEGE). 2 stretches are compositionally biased toward basic residues: residues 365-374 (SSKKSSKKAS) and 390-405 (PKKKSSKAKSPSKSRS).

This is an uncharacterized protein from Acanthamoeba polyphaga (Amoeba).